Reading from the N-terminus, the 101-residue chain is UPF0213 protein VC_A0739 (101 aa).

The GIY-YIG domain occupies 9–85; that stretch reads SPWFVYLVRC…KALSKSQKEA (77 aa).

This sequence belongs to the UPF0213 family.

The sequence is that of UPF0213 protein VC_A0739 from Vibrio cholerae serotype O1 (strain ATCC 39315 / El Tor Inaba N16961).